Reading from the N-terminus, the 429-residue chain is Enolase (429 aa).

A (2R)-2-phosphoglycerate-binding site is contributed by Gln168. The active-site Proton donor is Glu210. Residues Asp247, Glu288, and Asp315 each coordinate Mg(2+). (2R)-2-phosphoglycerate is bound by residues Lys340, Arg369, Ser370, and Lys391. The active-site Proton acceptor is Lys340.

It belongs to the enolase family. Requires Mg(2+) as cofactor.

It is found in the cytoplasm. It localises to the secreted. The protein localises to the cell surface. It carries out the reaction (2R)-2-phosphoglycerate = phosphoenolpyruvate + H2O. It participates in carbohydrate degradation; glycolysis; pyruvate from D-glyceraldehyde 3-phosphate: step 4/5. In terms of biological role, catalyzes the reversible conversion of 2-phosphoglycerate (2-PG) into phosphoenolpyruvate (PEP). It is essential for the degradation of carbohydrates via glycolysis. The sequence is that of Enolase from Trichormus variabilis (strain ATCC 29413 / PCC 7937) (Anabaena variabilis).